A 172-amino-acid chain; its full sequence is Large ribosomal subunit protein uL10 (172 aa).

The protein belongs to the universal ribosomal protein uL10 family. In terms of assembly, part of the ribosomal stalk of the 50S ribosomal subunit. The N-terminus interacts with L11 and the large rRNA to form the base of the stalk. The C-terminus forms an elongated spine to which L12 dimers bind in a sequential fashion forming a multimeric L10(L12)X complex.

Its function is as follows. Forms part of the ribosomal stalk, playing a central role in the interaction of the ribosome with GTP-bound translation factors. The protein is Large ribosomal subunit protein uL10 (rplJ) of Caulobacter vibrioides (strain ATCC 19089 / CIP 103742 / CB 15) (Caulobacter crescentus).